Consider the following 535-residue polypeptide: Dynein axonemal assembly factor 8 (535 aa).

Disordered regions lie at residues alanine 112 to arginine 215, arginine 228 to proline 267, proline 344 to arginine 380, threonine 395 to cysteine 444, and isoleucine 461 to leucine 535. The span at arginine 125–arginine 139 shows a compositional bias: basic and acidic residues. Polar residues predominate over residues glycine 166–serine 175. Serine 175 carries the phosphoserine modification. Position 362 is a phosphoserine (serine 362). Positions aspartate 415–glutamate 424 are enriched in acidic residues. The segment covering serine 435–cysteine 444 has biased composition (polar residues).

It is found in the dynein axonemal particle. Its subcellular location is the cytoplasm. In terms of biological role, in cyliated cells, dynein axonemal particle-specific protein required for deployment of ODA to the axoneme. Interacts with outer dynein arm (ODA) subunits. This is Dynein axonemal assembly factor 8 (DNAAF8) from Macaca fascicularis (Crab-eating macaque).